The chain runs to 55 residues: MGMSFSHLLIVLLIIFVLFGAGKLPQVMSDLAKGLKAFKDGMKDDGSDNDNDKNK.

A helical transmembrane segment spans residues 1–21 (MGMSFSHLLIVLLIIFVLFGA).

It belongs to the TatA/E family. The Tat system comprises two distinct complexes: a TatABC complex, containing multiple copies of TatA, TatB and TatC subunits, and a separate TatA complex, containing only TatA subunits. Substrates initially bind to the TatABC complex, which probably triggers association of the separate TatA complex to form the active translocon.

It localises to the cell inner membrane. Part of the twin-arginine translocation (Tat) system that transports large folded proteins containing a characteristic twin-arginine motif in their signal peptide across membranes. TatA could form the protein-conducting channel of the Tat system. This chain is Sec-independent protein translocase protein TatA, found in Rickettsia peacockii (strain Rustic).